The following is a 315-amino-acid chain: Ferrochelatase (315 aa).

Residues H193 and E273 each coordinate Fe cation.

The protein belongs to the ferrochelatase family.

Its subcellular location is the cytoplasm. The enzyme catalyses heme b + 2 H(+) = protoporphyrin IX + Fe(2+). It participates in porphyrin-containing compound metabolism; protoheme biosynthesis; protoheme from protoporphyrin-IX: step 1/1. Functionally, catalyzes the ferrous insertion into protoporphyrin IX. The protein is Ferrochelatase of Wolbachia sp. subsp. Drosophila simulans (strain wRi).